A 722-amino-acid chain; its full sequence is Transcription factor kayak, isoforms D/sro (722 aa).

A compositionally biased stretch (low complexity) spans 173-188; the sequence is QHQTQQQHQSQQQQQH. Disordered stretches follow at residues 173 to 193, 283 to 317, and 350 to 407; these read QHQT…RQDY, LGQG…HTDS, and GSAS…KRRV. Over residues 283 to 300 the composition is skewed to polar residues; sequence LGQGSESEDSNASYNDTQ. Composition is skewed to low complexity over residues 308-317 and 350-364; these read TDTSSAHTDS and GSAS…TSNT. A bZIP domain is found at 385-448; it reads EQKRAVRRER…NQLEYLLATH (64 aa). Positions 387-406 are basic motif; the sequence is KRAVRRERNKQAAARCRKRR. Residues 413-420 are leucine-zipper; sequence LTEEVEQL. The span at 477–498 shows a compositional bias: low complexity; that stretch reads AGSSGSGASSHHNHNSNDSSNG. Disordered regions lie at residues 477–519 and 683–722; these read AGSS…PLDL and DGGT…LVSL. Over residues 506 to 516 the composition is skewed to polar residues; that stretch reads TLNSTGRSNSP. The residue at position 515 (Ser515) is a Phosphoserine.

It belongs to the bZIP family. Fos subfamily. In terms of assembly, homodimer. Heterodimer with Jra. The kay-Jra heterodimer binds more stably to the AP-1 site than either of the two proteins alone.

It is found in the nucleus. Developmentally regulated transcription factor AP-1 binds and recognizes the enhancer DNA sequence: 5'-TGA[CG]TCA-3'. May play a role in the function or determination of a particular subset of cells in the developing embryo. It is able to carry out its function either independently of or in conjunction with Jra. The polypeptide is Transcription factor kayak, isoforms D/sro (Drosophila melanogaster (Fruit fly)).